The primary structure comprises 1018 residues: UPF0182 protein Francci3_3781 (1018 aa).

Helical transmembrane passes span 13–33, 60–80, 109–129, 167–187, 208–228, 250–270, and 283–303; these read TKVLVPVLLVIVLAITIIAIF, ILLFVLFGVVMAIIVGTNIVL, MLLILLAVTTLFGLAAGLSAA, FLLGFLLTAVLLSLLVTLLTH, AHISVLLGLLALLKAWAYYLD, AVLPAKLILLFISLACAVLFI, and LGAGILVLSSVVIGGIYPAIV. 2 stretches are compositionally biased toward low complexity: residues 886–896 and 960–980; these read TTDAGQDGTPA and SSPAATPPAATATRAGASVPA. 2 disordered regions span residues 886–920 and 960–1018; these read TTDAGQDGTPAPRSGQGGAGVPPPGQTALQDAVGD and SSPA…PAPG. Positions 981–995 are enriched in pro residues; the sequence is SPVPASPAAKPPAPS.

The protein belongs to the UPF0182 family.

It localises to the cell membrane. The polypeptide is UPF0182 protein Francci3_3781 (Frankia casuarinae (strain DSM 45818 / CECT 9043 / HFP020203 / CcI3)).